The primary structure comprises 41 residues: Alpha-conotoxin-like Pu1.2 (41 aa).

A propeptide spanning residues 1–21 (LDGRNAAADFETSDLLAMTIR) is cleaved from the precursor. 2 disulfides stabilise this stretch: C24–C30 and C25–C37. C37 is modified (cysteine amide). The propeptide occupies 38-41 (GGKR).

It belongs to the conotoxin A superfamily. Non-native isomers 'ribbon' (with disulfide connectivity C1-C4, C2-C3) and 'beads' (with disulfide connectivity C1-C2, C3-C4) also inhibit high voltage-activated (HVA) calcium channel currents in rat DRG neurons (25-30% inhibition at 1 uM toxin). In terms of processing, mutants Pu1.2(9-16), [C3S; C9S]Pu1.2 and [C4S]Pu1.2(1-9) are all C-terminally amidated. In terms of tissue distribution, expressed by the venom duct.

It localises to the secreted. In terms of biological role, alpha-conotoxins act on postsynaptic membranes, they bind to the nicotinic acetylcholine receptors (nAChR) and thus inhibit them. This toxin also inhibits high voltage-activated (HVA) calcium channel currents in rat DRG neurons (27% inhibition at 1 uM toxin) probably by activating GABA(B) receptors (GABBR1 and/or GABBR2). The chain is Alpha-conotoxin-like Pu1.2 from Conus pulicarius (Flea-bitten cone).